A 224-amino-acid chain; its full sequence is Octanoyltransferase (224 aa).

One can recognise a BPL/LPL catalytic domain in the interval 38 to 213; it reads SATVDELWWV…YLVRRLGYSA (176 aa). Substrate contacts are provided by residues 77–84, 144–146, and 157–159; these read RGGQVTYH, SLG, and GLS. Cys-175 functions as the Acyl-thioester intermediate in the catalytic mechanism.

Belongs to the LipB family.

The protein localises to the cytoplasm. It carries out the reaction octanoyl-[ACP] + L-lysyl-[protein] = N(6)-octanoyl-L-lysyl-[protein] + holo-[ACP] + H(+). It functions in the pathway protein modification; protein lipoylation via endogenous pathway; protein N(6)-(lipoyl)lysine from octanoyl-[acyl-carrier-protein]: step 1/2. In terms of biological role, catalyzes the transfer of endogenously produced octanoic acid from octanoyl-acyl-carrier-protein onto the lipoyl domains of lipoate-dependent enzymes. Lipoyl-ACP can also act as a substrate although octanoyl-ACP is likely to be the physiological substrate. The polypeptide is Octanoyltransferase (Nitrosococcus oceani (strain ATCC 19707 / BCRC 17464 / JCM 30415 / NCIMB 11848 / C-107)).